We begin with the raw amino-acid sequence, 338 residues long: Elongation factor Ts, mitochondrial (338 aa).

A mitochondrion-targeting transit peptide spans Met-1 to Ser-55. Residues Lys-89, Lys-146, and Lys-205 each carry the N6-succinyllysine modification. Ser-283 carries the phosphoserine modification.

It belongs to the EF-Ts family.

Its subcellular location is the mitochondrion. Its function is as follows. Associates with the EF-Tu.GDP complex and induces the exchange of GDP to GTP. It remains bound to the aminoacyl-tRNA.EF-Tu.GTP complex up to the GTP hydrolysis stage on the ribosome. The polypeptide is Elongation factor Ts, mitochondrial (Bos taurus (Bovine)).